Here is a 133-residue protein sequence, read N- to C-terminus: MARPDMGGPKTGGFGGPRSGGFGGGGGGGFGGGGFGGGRGGDRGDRGDRDDRGGDEGGGRRGFGRRKVCRFCADKALKVDYKDQGQMKYFLTERGKIIPRRISGNCAKHQREVATAIKRGRMLAILPYTVGQM.

Positions 1–63 (MARPDMGGPK…GDEGGGRRGF (63 aa)) are disordered. Gly residues predominate over residues 9–39 (PKTGGFGGPRSGGFGGGGGGGFGGGGFGGGR). Residues 40-59 (GGDRGDRGDRDDRGGDEGGG) are compositionally biased toward basic and acidic residues.

The protein belongs to the bacterial ribosomal protein bS18 family. As to quaternary structure, part of the 30S ribosomal subunit. Forms a tight heterodimer with protein bS6.

Its function is as follows. Binds as a heterodimer with protein bS6 to the central domain of the 16S rRNA, where it helps stabilize the platform of the 30S subunit. The sequence is that of Small ribosomal subunit protein bS18 from Anaeromyxobacter dehalogenans (strain 2CP-1 / ATCC BAA-258).